Reading from the N-terminus, the 206-residue chain is Probable N-acetyltransferase 14 (206 aa).

The N-acetyltransferase domain occupies 55 to 206 (LRFVLASFAL…TLVREFSKEL (152 aa)). The chain crosses the membrane as a helical span at residues 57 to 77 (FVLASFALALLLPVFLAVAAM).

The protein belongs to the camello family.

The protein localises to the membrane. Probable acetyltransferase. Its function is as follows. May act as a transcription factor regulating the expression of coproporphyrinogen oxidase by binding to a promoter regulatory element. The polypeptide is Probable N-acetyltransferase 14 (Bos taurus (Bovine)).